Reading from the N-terminus, the 474-residue chain is uncharacterized protein (474 aa).

The chain crosses the membrane as a helical span at residues 374–398; the sequence is GLICYLALFSISLMIENIIGLTISL.

The protein localises to the membrane. This is an uncharacterized protein from Borreliella burgdorferi (strain ATCC 35210 / DSM 4680 / CIP 102532 / B31) (Borrelia burgdorferi).